The primary structure comprises 157 residues: Snaclec 3 (157 aa).

A signal peptide spans 1 to 23 (MGRLIFLSFGWLVVFLSLSGTGA). Intrachain disulfides connect Cys27–Cys38, Cys55–Cys153, and Cys128–Cys145. The region spanning 34 to 154 (YGQHCYRAFS…CAGHYPFICK (121 aa)) is the C-type lectin domain.

It belongs to the snaclec family. Heterodimer; disulfide-linked. Expressed by the venom gland.

The protein resides in the secreted. Its function is as follows. Interferes with one step of hemostasis (modulation of platelet aggregation, or coagulation cascade, for example). This is Snaclec 3 from Bitis gabonica (Gaboon adder).